The following is a 106-amino-acid chain: ATP-dependent Clp protease adapter protein ClpS (106 aa).

Belongs to the ClpS family. As to quaternary structure, binds to the N-terminal domain of the chaperone ClpA.

Involved in the modulation of the specificity of the ClpAP-mediated ATP-dependent protein degradation. In Erwinia tasmaniensis (strain DSM 17950 / CFBP 7177 / CIP 109463 / NCPPB 4357 / Et1/99), this protein is ATP-dependent Clp protease adapter protein ClpS.